The primary structure comprises 1707 residues: Kinesin-like protein KIF1A (1707 aa).

The region spanning 5-354 (SVKVAVRVRP…LRYADRAKQI (350 aa)) is the Kinesin motor domain. ATP is bound by residues Gly-102, Lys-103, Ser-104, Tyr-105, and Ser-215. Ser-104 is a binding site for Mg(2+). A coiled-coil region spans residues 439-466 (SEEAIERLKETEKIIAELNETWEEKLRR). In terms of domain architecture, FHA spans 525-581 (TRVGREDAERRQDIVLSGHFIKEEHCIFRSDSRGGGEAVVTLEPCEGADTYVNGKKV). Coiled coils occupy residues 637–671 (EKQG…LLEQ) and 811–831 (LEKL…AAEV). The required for interaction with CALM1, PPFIA2 and TANC2 stretch occupies residues 657 to 1105 (QYRREREEAT…LCKDVLSPLR (449 aa)). 2 disordered regions span residues 1424-1462 (PVPE…EVPN) and 1536-1576 (TDVR…EKEP). Low complexity predominate over residues 1429–1453 (LSPASSEDSESRSSSGASSPLSAEG). The PH domain maps to 1592-1690 (IVSKKGYLHF…WLYAFNPLLA (99 aa)).

Belongs to the TRAFAC class myosin-kinesin ATPase superfamily. Kinesin family. Unc-104 subfamily. As to quaternary structure, dimeric motor; dimerization is required for ATP-driven processive motility. Monomer in vitro. Interacts with PPFIA1 and PPFIA4. Interacts with CALM1; the interaction is increased in presence of calcium and increases neuronal dense core vesicles motility. Interacts with PPFIA2 and TANC2; both interactions allow the recruitment of neuronal dense core vesicles to dendritic spines and decrease in presence of calcium. Interacts with SYT4 (unphosphorylated) and SYT11; both interactions increase in presence of calcium. Interacts with MADD.

It localises to the cytoplasm. It is found in the cytoskeleton. The protein localises to the cell projection. The protein resides in the neuron projection. Its subcellular location is the axon. It localises to the perinuclear region. It is found in the synapse. The protein localises to the cytoplasmic vesicle. The protein resides in the secretory vesicle. Its subcellular location is the neuronal dense core vesicle membrane. The catalysed reaction is ATP + H2O + a kinesin associated with a microtubule at position (n) = ADP + phosphate a kinesin associated with a microtubule at position (n+1, toward the plus end).. Kinesin motor with a plus-end-directed microtubule motor activity, involved in anterograde axonal transport of synaptic vesicle precursors. Also required for neuronal dense core vesicles (DCVs) transport to the dendritic spines and axons. The interaction calcium-dependent with CALM1 increases vesicle motility and interaction with the scaffolding proteins PPFIA2 and TANC2 recruits DCVs to synaptic sites. The chain is Kinesin-like protein KIF1A from Rattus norvegicus (Rat).